Here is a 353-residue protein sequence, read N- to C-terminus: Protein MGF 360-10L (353 aa).

An ANK repeat occupies 57–89 (DLNTALMLATKENNYQLIKLFTEWGADINYGLI). Asparagine 172 is a glycosylation site (N-linked (GlcNAc...) asparagine; by host). 2 helical membrane passes run 206–228 (LNTW…NLYE) and 249–271 (NFLT…IASI). The N-linked (GlcNAc...) asparagine; by host glycan is linked to asparagine 342.

The protein belongs to the asfivirus MGF 360 family.

Its subcellular location is the host membrane. In terms of biological role, plays a role in virus cell tropism, and may be required for efficient virus replication in macrophages. The chain is Protein MGF 360-10L from African swine fever virus (isolate Warthog/Namibia/Wart80/1980) (ASFV).